The chain runs to 270 residues: 2-oxoglutarate synthase subunit KorB (270 aa).

As to quaternary structure, heterotetramer of the KorA, KorB, KorC and KorD subunits.

It carries out the reaction 2 oxidized [2Fe-2S]-[ferredoxin] + 2-oxoglutarate + CoA = succinyl-CoA + 2 reduced [2Fe-2S]-[ferredoxin] + CO2 + H(+). This is 2-oxoglutarate synthase subunit KorB (korB) from Methanocaldococcus jannaschii (strain ATCC 43067 / DSM 2661 / JAL-1 / JCM 10045 / NBRC 100440) (Methanococcus jannaschii).